A 750-amino-acid chain; its full sequence is GRIP and coiled-coil domain-containing protein C27D7.02c (750 aa).

Disordered regions lie at residues 14 to 53 (AQGQEEAKNRRRQFQEEDQLRRNNKSSNKLSQNEEDAKNM) and 188 to 280 (KTVE…RDIA). 2 stretches are compositionally biased toward basic and acidic residues: residues 18–34 (EEAKNRRRQFQEEDQLR) and 188–198 (KTVETKNDVPE). Residues 28 to 182 (QEEDQLRRNN…AQSIEQEVIS (155 aa)) adopt a coiled-coil conformation. The segment covering 201 to 213 (RPSTDTIGVSSAL) has biased composition (polar residues). Positions 213–243 (LSKKKKKRNRKNQKKKSTKQNIEATTENDAL) form a coiled coil. The segment covering 214 to 230 (SKKKKKRNRKNQKKKST) has biased composition (basic residues). The segment covering 233–251 (NIEATTENDALSESISTPD) has biased composition (polar residues). The segment covering 269–280 (ADSKEEERRDIA) has biased composition (basic and acidic residues). The stretch at 344–665 (KLVEELTKQL…YEHLQKSFKN (322 aa)) forms a coiled coil. Residues 672 to 703 (KQQPSNHGRNSSVSRSSSSVEVNSKHPGSDDM) are disordered. Residues 676–693 (SNHGRNSSVSRSSSSVEV) show a composition bias toward low complexity. The span at 694–703 (NSKHPGSDDM) shows a compositional bias: basic and acidic residues. A GRIP domain is found at 700-748 (SDDMLIDKEYTRNILFQFLEQRDRRPEIVNLLSILLDLSEEQKQKLLSV).

It is found in the cytoplasm. The polypeptide is GRIP and coiled-coil domain-containing protein C27D7.02c (Schizosaccharomyces pombe (strain 972 / ATCC 24843) (Fission yeast)).